The primary structure comprises 275 residues: 4-hydroxy-tetrahydrodipicolinate reductase (275 aa).

Residues 13–18 and 108–110 each bind NAD(+); these read GAAGKM and GTT. Catalysis depends on His-164, which acts as the Proton donor/acceptor. His-165 is a (S)-2,3,4,5-tetrahydrodipicolinate binding site. Lys-168 (proton donor) is an active-site residue. Residue 174 to 175 coordinates (S)-2,3,4,5-tetrahydrodipicolinate; sequence GT.

The protein belongs to the DapB family.

Its subcellular location is the cytoplasm. The catalysed reaction is (S)-2,3,4,5-tetrahydrodipicolinate + NAD(+) + H2O = (2S,4S)-4-hydroxy-2,3,4,5-tetrahydrodipicolinate + NADH + H(+). It carries out the reaction (S)-2,3,4,5-tetrahydrodipicolinate + NADP(+) + H2O = (2S,4S)-4-hydroxy-2,3,4,5-tetrahydrodipicolinate + NADPH + H(+). It functions in the pathway amino-acid biosynthesis; L-lysine biosynthesis via DAP pathway; (S)-tetrahydrodipicolinate from L-aspartate: step 4/4. Catalyzes the conversion of 4-hydroxy-tetrahydrodipicolinate (HTPA) to tetrahydrodipicolinate. The polypeptide is 4-hydroxy-tetrahydrodipicolinate reductase (Cyanothece sp. (strain PCC 7425 / ATCC 29141)).